Consider the following 557-residue polypeptide: Dihydroxy-acid dehydratase (557 aa).

[2Fe-2S] cluster is bound at residue C50. D82 contacts Mg(2+). C123 is a [2Fe-2S] cluster binding site. Residues D124 and K125 each coordinate Mg(2+). K125 is modified (N6-carboxylysine). Residue C195 participates in [2Fe-2S] cluster binding. E447 provides a ligand contact to Mg(2+). The Proton acceptor role is filled by S473.

Belongs to the IlvD/Edd family. In terms of assembly, homodimer. [2Fe-2S] cluster is required as a cofactor. Mg(2+) serves as cofactor.

The catalysed reaction is (2R)-2,3-dihydroxy-3-methylbutanoate = 3-methyl-2-oxobutanoate + H2O. It catalyses the reaction (2R,3R)-2,3-dihydroxy-3-methylpentanoate = (S)-3-methyl-2-oxopentanoate + H2O. It participates in amino-acid biosynthesis; L-isoleucine biosynthesis; L-isoleucine from 2-oxobutanoate: step 3/4. It functions in the pathway amino-acid biosynthesis; L-valine biosynthesis; L-valine from pyruvate: step 3/4. Functionally, functions in the biosynthesis of branched-chain amino acids. Catalyzes the dehydration of (2R,3R)-2,3-dihydroxy-3-methylpentanoate (2,3-dihydroxy-3-methylvalerate) into 2-oxo-3-methylpentanoate (2-oxo-3-methylvalerate) and of (2R)-2,3-dihydroxy-3-methylbutanoate (2,3-dihydroxyisovalerate) into 2-oxo-3-methylbutanoate (2-oxoisovalerate), the penultimate precursor to L-isoleucine and L-valine, respectively. The protein is Dihydroxy-acid dehydratase of Janthinobacterium sp. (strain Marseille) (Minibacterium massiliensis).